Consider the following 174-residue polypeptide: MTTIVSVRRNNQVVIAGDGQVSLGNTVMKGNAKKVRRLYHNKVLAGFAGGTADAFTLFERFEAKLEMHQGHLLRSAVELAKDWRTDRMLRKLEAMLVVADAEASLIITGNGDVVQPEYDLVAIGSGGNYAQAAALALLQNTELSALEIAEKSLTIAGDICVFTNQFKTIEELNY.

Residue Thr2 is part of the active site. Gly157, Cys160, and Thr163 together coordinate Na(+).

It belongs to the peptidase T1B family. HslV subfamily. As to quaternary structure, a double ring-shaped homohexamer of HslV is capped on each side by a ring-shaped HslU homohexamer. The assembly of the HslU/HslV complex is dependent on binding of ATP.

The protein localises to the cytoplasm. It carries out the reaction ATP-dependent cleavage of peptide bonds with broad specificity.. Its activity is regulated as follows. Allosterically activated by HslU binding. Protease subunit of a proteasome-like degradation complex believed to be a general protein degrading machinery. In Shewanella putrefaciens (strain CN-32 / ATCC BAA-453), this protein is ATP-dependent protease subunit HslV.